We begin with the raw amino-acid sequence, 396 residues long: Diphosphomevalonate decarboxylase (396 aa).

Residues 19 to 22 (YWGK), R74, 153 to 158 (SGSACR), and T209 each bind (R)-5-diphosphomevalonate.

The protein belongs to the diphosphomevalonate decarboxylase family. As to quaternary structure, homodimer.

The enzyme catalyses (R)-5-diphosphomevalonate + ATP = isopentenyl diphosphate + ADP + phosphate + CO2. It functions in the pathway isoprenoid biosynthesis; isopentenyl diphosphate biosynthesis via mevalonate pathway; isopentenyl diphosphate from (R)-mevalonate: step 3/3. Diphosphomevalonate decarboxylase; part of the second module of ergosterol biosynthesis pathway that includes the middle steps of the pathway. MVD1/ERG19 converts diphosphomevalonate into isopentenyl diphosphate. The second module is carried out in the vacuole and involves the formation of farnesyl diphosphate, which is also an important intermediate in the biosynthesis of ubiquinone, dolichol, heme and prenylated proteins. Activity by the mevalonate kinase ERG12 first converts mevalonate into 5-phosphomevalonate. 5-phosphomevalonate is then further converted to 5-diphosphomevalonate by the phosphomevalonate kinase ERG8. The diphosphomevalonate decarboxylase MVD1/ERG19 then produces isopentenyl diphosphate. The isopentenyl-diphosphate delta-isomerase IDI1 then catalyzes the 1,3-allylic rearrangement of the homoallylic substrate isopentenyl (IPP) to its highly electrophilic allylic isomer, dimethylallyl diphosphate (DMAPP). Finally the farnesyl diphosphate synthase ERG20 catalyzes the sequential condensation of isopentenyl pyrophosphate with dimethylallyl pyrophosphate, and then with the resultant geranylpyrophosphate to the ultimate product farnesyl pyrophosphate. This is Diphosphomevalonate decarboxylase from Saccharomyces cerevisiae (strain ATCC 204508 / S288c) (Baker's yeast).